Consider the following 220-residue polypeptide: N-(5'-phosphoribosyl)anthranilate isomerase (220 aa).

The protein belongs to the TrpF family.

The enzyme catalyses N-(5-phospho-beta-D-ribosyl)anthranilate = 1-(2-carboxyphenylamino)-1-deoxy-D-ribulose 5-phosphate. The protein operates within amino-acid biosynthesis; L-tryptophan biosynthesis; L-tryptophan from chorismate: step 3/5. The polypeptide is N-(5'-phosphoribosyl)anthranilate isomerase (Xylella fastidiosa (strain 9a5c)).